A 108-amino-acid polypeptide reads, in one-letter code: Trissin (108 aa).

Residues 1–29 form the signal peptide; that stretch reads MTKTTMHWLAHFQIILLCIWLMCPPSSQA. Disulfide bonds link Cys32/Cys43, Cys35/Cys52, and Cys39/Cys51. A propeptide spanning residues 57–108 is cleaved from the precursor; that stretch reads RKRSDPDALRQSSNRRLIDFILLQGRALFTQELRERRHNGTLMDLGLNTYYP.

The protein localises to the secreted. Activates the G-protein coupled receptor TrissinR in vitro, leading to increased intracellular calcium ion levels. This chain is Trissin, found in Drosophila melanogaster (Fruit fly).